A 103-amino-acid chain; its full sequence is Small ribosomal subunit protein uS10 (103 aa).

Belongs to the universal ribosomal protein uS10 family. Part of the 30S ribosomal subunit.

Involved in the binding of tRNA to the ribosomes. This Borrelia duttonii (strain Ly) protein is Small ribosomal subunit protein uS10.